A 932-amino-acid chain; its full sequence is DNA mismatch repair protein MutS (932 aa).

615–622 (GPNMAGKS) provides a ligand contact to ATP.

Belongs to the DNA mismatch repair MutS family.

This protein is involved in the repair of mismatches in DNA. It is possible that it carries out the mismatch recognition step. This protein has a weak ATPase activity. The polypeptide is DNA mismatch repair protein MutS (Clostridium botulinum (strain Kyoto / Type A2)).